Consider the following 451-residue polypeptide: Phosphoglucosamine mutase (451 aa).

Ser-101 functions as the Phosphoserine intermediate in the catalytic mechanism. Mg(2+) contacts are provided by Ser-101, Asp-240, Asp-242, and Asp-244. At Ser-101 the chain carries Phosphoserine.

The protein belongs to the phosphohexose mutase family. Requires Mg(2+) as cofactor. In terms of processing, activated by phosphorylation.

It catalyses the reaction alpha-D-glucosamine 1-phosphate = D-glucosamine 6-phosphate. Catalyzes the conversion of glucosamine-6-phosphate to glucosamine-1-phosphate. This Streptococcus pyogenes serotype M12 (strain MGAS2096) protein is Phosphoglucosamine mutase.